We begin with the raw amino-acid sequence, 488 residues long: Glutamyl-tRNA(Gln) amidotransferase subunit A (488 aa).

Active-site charge relay system residues include Lys77 and Ser152. The active-site Acyl-ester intermediate is the Ser176.

Belongs to the amidase family. GatA subfamily. Heterotrimer of A, B and C subunits.

The enzyme catalyses L-glutamyl-tRNA(Gln) + L-glutamine + ATP + H2O = L-glutaminyl-tRNA(Gln) + L-glutamate + ADP + phosphate + H(+). In terms of biological role, allows the formation of correctly charged Gln-tRNA(Gln) through the transamidation of misacylated Glu-tRNA(Gln) in organisms which lack glutaminyl-tRNA synthetase. The reaction takes place in the presence of glutamine and ATP through an activated gamma-phospho-Glu-tRNA(Gln). The protein is Glutamyl-tRNA(Gln) amidotransferase subunit A of Streptococcus pyogenes serotype M2 (strain MGAS10270).